The primary structure comprises 277 residues: Elongation factor Ts (277 aa).

The involved in Mg(2+) ion dislocation from EF-Tu stretch occupies residues 79-82; it reads TDFV.

This sequence belongs to the EF-Ts family.

The protein localises to the cytoplasm. Associates with the EF-Tu.GDP complex and induces the exchange of GDP to GTP. It remains bound to the aminoacyl-tRNA.EF-Tu.GTP complex up to the GTP hydrolysis stage on the ribosome. The protein is Elongation factor Ts of Phytoplasma australiense.